The primary structure comprises 117 residues: MLPAKMVTTAFELPGYRVSANLGVVRGITVRSRSLVGNFFGGLQSLFGGNITIYTSLCERARSETYAEMCQHAQALGADAVIGMRYDATEVMTGLTEVLCYGTAVKLEPLAGREPNP.

This sequence belongs to the UPF0145 family.

The chain is UPF0145 protein CV_4322 from Chromobacterium violaceum (strain ATCC 12472 / DSM 30191 / JCM 1249 / CCUG 213 / NBRC 12614 / NCIMB 9131 / NCTC 9757 / MK).